A 247-amino-acid polypeptide reads, in one-letter code: 5'-nucleotidase SurE (247 aa).

A divalent metal cation is bound by residues Asp8, Asp9, Ser39, and Asn91.

It belongs to the SurE nucleotidase family. A divalent metal cation serves as cofactor.

It is found in the cytoplasm. The enzyme catalyses a ribonucleoside 5'-phosphate + H2O = a ribonucleoside + phosphate. Its function is as follows. Nucleotidase that shows phosphatase activity on nucleoside 5'-monophosphates. In Azoarcus sp. (strain BH72), this protein is 5'-nucleotidase SurE.